The sequence spans 100 residues: uncharacterized protein (100 aa).

3 helical membrane passes run 11–33 (VWSILFVTGIVTACLFAGVSVLM), 45–64 (WMLAGLIVLGVFAIWYSLVY), and 68–90 (WEGAALGMLGFNVIFGAIAGYLI).

The protein localises to the cell membrane. This is an uncharacterized protein from Bacillus subtilis (strain 168).